A 138-amino-acid chain; its full sequence is Large ribosomal subunit protein uL16 (138 aa).

It belongs to the universal ribosomal protein uL16 family. As to quaternary structure, part of the 50S ribosomal subunit.

In terms of biological role, binds 23S rRNA and is also seen to make contacts with the A and possibly P site tRNAs. In Hyphomonas neptunium (strain ATCC 15444), this protein is Large ribosomal subunit protein uL16.